Consider the following 298-residue polypeptide: NAD kinase (298 aa).

Residue Asp-80 is the Proton acceptor of the active site. Residues 80–81 (DG), 154–155 (ND), Arg-182, Asp-184, 195–200 (TAYALS), Ala-219, and Gln-253 each bind NAD(+).

Belongs to the NAD kinase family. Requires a divalent metal cation as cofactor.

Its subcellular location is the cytoplasm. It catalyses the reaction NAD(+) + ATP = ADP + NADP(+) + H(+). Its function is as follows. Involved in the regulation of the intracellular balance of NAD and NADP, and is a key enzyme in the biosynthesis of NADP. Catalyzes specifically the phosphorylation on 2'-hydroxyl of the adenosine moiety of NAD to yield NADP. The polypeptide is NAD kinase (Paracidovorax citrulli (strain AAC00-1) (Acidovorax citrulli)).